The chain runs to 391 residues: ATP phosphoribosyltransferase regulatory subunit (391 aa).

It belongs to the class-II aminoacyl-tRNA synthetase family. HisZ subfamily. Heteromultimer composed of HisG and HisZ subunits.

Its subcellular location is the cytoplasm. It participates in amino-acid biosynthesis; L-histidine biosynthesis; L-histidine from 5-phospho-alpha-D-ribose 1-diphosphate: step 1/9. In terms of biological role, required for the first step of histidine biosynthesis. May allow the feedback regulation of ATP phosphoribosyltransferase activity by histidine. The sequence is that of ATP phosphoribosyltransferase regulatory subunit from Bacillus pumilus (strain SAFR-032).